We begin with the raw amino-acid sequence, 440 residues long: Probable exopolygalacturonase C (440 aa).

Positions 1–21 (MLITNPALLGILASLVPLALG) are cleaved as a signal peptide. Residues Asn84 and Asn151 are each glycosylated (N-linked (GlcNAc...) asparagine). PbH1 repeat units lie at residues 188 to 210 (GDDI…PFNT), 217 to 238 (GTNI…AVNT), and 240 to 261 (SHNI…SIGS). N-linked (GlcNAc...) asparagine glycosylation occurs at Asn219. Catalysis depends on Asp231, which acts as the Proton donor. His255 is a catalytic residue. A glycan (N-linked (GlcNAc...) asparagine) is linked at Asn271. Residues 272 to 293 (ITNLRFEDVTVIDALYAARFKS) form a PbH1 4 repeat. N-linked (GlcNAc...) asparagine glycosylation occurs at Asn313. The cysteines at positions 389 and 395 are disulfide-linked. Asn434 carries N-linked (GlcNAc...) asparagine glycosylation.

It belongs to the glycosyl hydrolase 28 family.

Its subcellular location is the secreted. It carries out the reaction [(1-&gt;4)-alpha-D-galacturonosyl](n) + H2O = alpha-D-galacturonate + [(1-&gt;4)-alpha-D-galacturonosyl](n-1). Functionally, specific in hydrolyzing the terminal glycosidic bond of polygalacturonic acid and oligogalacturonates. This is Probable exopolygalacturonase C (pgxC) from Aspergillus fumigatus (strain CBS 144.89 / FGSC A1163 / CEA10) (Neosartorya fumigata).